Consider the following 1213-residue polypeptide: Protein jagged-1b (1213 aa).

Positions 1–26 (MILRRSSVFSAFYLHAFLLCLRTTVS) are cleaved as a signal peptide. The Extracellular segment spans residues 27–1064 (DASGHFELEI…HQIPSPKTDY (1038 aa)). Asparagine 139 is a glycosylation site (N-linked (GlcNAc...) asparagine). Residues 182–226 (VTCLEHYYGFGCNKFCRPRDEFFGHYTCDQNGNKTCLEGWTGPDC) enclose the DSL domain. Disulfide bonds link cysteine 184-cysteine 193 and cysteine 197-cysteine 209. Asparagine 214 is a glycosylation site (N-linked (GlcNAc...) asparagine). Disulfide bonds link cysteine 217-cysteine 226, cysteine 231-cysteine 242, cysteine 235-cysteine 248, cysteine 250-cysteine 259, cysteine 262-cysteine 273, cysteine 268-cysteine 279, cysteine 281-cysteine 290, cysteine 297-cysteine 309, cysteine 303-cysteine 319, cysteine 321-cysteine 330, cysteine 337-cysteine 348, cysteine 342-cysteine 357, cysteine 359-cysteine 368, cysteine 375-cysteine 386, cysteine 380-cysteine 395, cysteine 397-cysteine 406, cysteine 413-cysteine 424, cysteine 418-cysteine 433, cysteine 435-cysteine 444, cysteine 451-cysteine 461, cysteine 455-cysteine 470, cysteine 472-cysteine 481, cysteine 488-cysteine 499, cysteine 493-cysteine 508, cysteine 510-cysteine 519, cysteine 526-cysteine 537, cysteine 531-cysteine 546, cysteine 548-cysteine 557, cysteine 596-cysteine 612, cysteine 614-cysteine 623, cysteine 630-cysteine 641, cysteine 635-cysteine 650, cysteine 652-cysteine 661, cysteine 668-cysteine 679, cysteine 673-cysteine 688, cysteine 690-cysteine 699, cysteine 706-cysteine 717, cysteine 711-cysteine 726, and cysteine 728-cysteine 737. The EGF-like 1 domain occupies 227-260 (NTAICRQGCSTEHGSCKQPGGCKCLYGWQGPYCD). Positions 261–291 (KCIPHPGCVHGTCVEPWQCLCDTNWGGQLCD) constitute an EGF-like 2; atypical domain. 2 consecutive EGF-like domains span residues 293–331 (DLNYCGTHQPCLNGGTCSNTGPDKYQCSCEDGYSGVNCE) and 333–369 (AEHACLSNPCANGGTCKETSQGYECHCAIGWSGTSCE). The EGF-like 5; calcium-binding domain occupies 371–407 (NVDDCTPNQCKHGGTCQDLVNGFKCACPPHWTGKTCQ). The region spanning 409–445 (DANECEDKPCVNAKSCHNLIGAYFCECLPGWSGQNCD) is the EGF-like 6; calcium-binding domain. In terms of domain architecture, EGF-like 7; calcium-binding spans 447–482 (NINDCKGQCLNGGTCKDLVNGYRCLCPPGYTGEQCE). The EGF-like 8; calcium-binding domain maps to 484–520 (DVDECASSPCLNGGRCQDEVNGFQCLCPAGFSGQLCQ). EGF-like domains are found at residues 522 to 558 (DIDYCKPNPCQNGAQCFNLASDYFCKCPDDYEGKNCS) and 592 to 624 (SSNVCGPHGRCRSQAGGQFTCECQEGFRGTYCH). A glycan (N-linked (GlcNAc...) asparagine) is linked at asparagine 556. In terms of domain architecture, EGF-like 11; calcium-binding spans 626-662 (NINDCESNPCRNGGTCIDKVNVYQCICADGWEGVHCE). Residues 664-700 (NIDDCSLNPCLNKGACQDLVNDFYCECRNGWKGKTCH) enclose the EGF-like 12; calcium-binding domain. The region spanning 702-738 (RDSQCDEATCNNGGTCHDEGDTFKCRCSPGWEGATCN) is the EGF-like 13 domain. N-linked (GlcNAc...) asparagine glycosylation is present at asparagine 742. 9 cysteine pairs are disulfide-bonded: cysteine 745–cysteine 756, cysteine 750–cysteine 765, cysteine 767–cysteine 776, cysteine 783–cysteine 794, cysteine 788–cysteine 803, cysteine 805–cysteine 814, cysteine 821–cysteine 832, cysteine 826–cysteine 841, and cysteine 843–cysteine 852. Positions 746–777 (LPNPCENGGTCVVNGDSFNCVCKEGWEGSTCT) constitute an EGF-like 14 domain. Residues 779-815 (NTNDCNPHPCYNSGTCVDGENWYRCECAPGFAGPDCR) enclose the EGF-like 15; calcium-binding domain. The region spanning 817 to 853 (NINECQSSPCAFGSTCVDEINGYRCLCPPGRIGPDCQ) is the EGF-like 16; calcium-binding domain. The 55-residue stretch at 860–914 (CIANGQVTADGAKWEEDCNICQCQNGRIHCTMMWCGPKSCRIGKARGGCPASQSC) folds into the VWFC domain. Residues 918–956 (KEEQCFVKPCPSLGECWPSAPPPPSKCHASFSYQDDSCA) form the EGF-like 17 domain. 3 N-linked (GlcNAc...) asparagine glycosylation sites follow: asparagine 957, asparagine 988, and asparagine 1042. The chain crosses the membrane as a helical span at residues 1065–1087 (LVPLLSSIFIVLWIFALASAFLW). Residues 1088 to 1213 (CIHRRRKQNT…QSLNRMEYIV (126 aa)) are Cytoplasmic-facing. Residues 1181-1202 (EERAPNKNPNWTNKQDNRDLET) are disordered.

Its subcellular location is the membrane. It localises to the cell membrane. In terms of biological role, ligand for Notch receptors and involved in the mediation of Notch signaling. Seems to be involved in cell-fate decisions. The sequence is that of Protein jagged-1b (jag1b) from Danio rerio (Zebrafish).